The sequence spans 250 residues: Ribosomal RNA small subunit methyltransferase J (250 aa).

S-adenosyl-L-methionine contacts are provided by residues 101–102, 117–118, 153–154, and D171; these read RD, ER, and SS.

This sequence belongs to the methyltransferase superfamily. RsmJ family.

Its subcellular location is the cytoplasm. It catalyses the reaction guanosine(1516) in 16S rRNA + S-adenosyl-L-methionine = N(2)-methylguanosine(1516) in 16S rRNA + S-adenosyl-L-homocysteine + H(+). Specifically methylates the guanosine in position 1516 of 16S rRNA. This is Ribosomal RNA small subunit methyltransferase J from Klebsiella pneumoniae (strain 342).